The chain runs to 476 residues: tRNA-2-methylthio-N(6)-dimethylallyladenosine synthase (476 aa).

The 118-residue stretch at 5-122 (KKLYIKTWGC…LPEMINQVKG (118 aa)) folds into the MTTase N-terminal domain. Positions 14, 51, 85, 159, 163, and 166 each coordinate [4Fe-4S] cluster. Positions 145 to 377 (RAEGPSAFVS…QQRINQQAMS (233 aa)) constitute a Radical SAM core domain. The TRAM domain occupies 380–443 (RAMLGSVQRI…ANSLRGKVIR (64 aa)).

It belongs to the methylthiotransferase family. MiaB subfamily. In terms of assembly, monomer. It depends on [4Fe-4S] cluster as a cofactor.

The protein localises to the cytoplasm. It carries out the reaction N(6)-dimethylallyladenosine(37) in tRNA + (sulfur carrier)-SH + AH2 + 2 S-adenosyl-L-methionine = 2-methylsulfanyl-N(6)-dimethylallyladenosine(37) in tRNA + (sulfur carrier)-H + 5'-deoxyadenosine + L-methionine + A + S-adenosyl-L-homocysteine + 2 H(+). Its function is as follows. Catalyzes the methylthiolation of N6-(dimethylallyl)adenosine (i(6)A), leading to the formation of 2-methylthio-N6-(dimethylallyl)adenosine (ms(2)i(6)A) at position 37 in tRNAs that read codons beginning with uridine. In Photorhabdus laumondii subsp. laumondii (strain DSM 15139 / CIP 105565 / TT01) (Photorhabdus luminescens subsp. laumondii), this protein is tRNA-2-methylthio-N(6)-dimethylallyladenosine synthase.